The following is a 66-amino-acid chain: Large ribosomal subunit protein bL31 (66 aa).

The Zn(2+) site is built by C16, C18, C36, and C39.

Belongs to the bacterial ribosomal protein bL31 family. Type A subfamily. Part of the 50S ribosomal subunit. Zn(2+) serves as cofactor.

In terms of biological role, binds the 23S rRNA. In Priestia megaterium (Bacillus megaterium), this protein is Large ribosomal subunit protein bL31.